We begin with the raw amino-acid sequence, 425 residues long: Na(+)/H(+) antiporter NhaA 1 (425 aa).

The next 11 membrane-spanning stretches (helical) occupy residues 20 to 40 (AGGV…NSPL), 65 to 85 (PHLW…GLEI), 102 to 122 (LPFI…LAVT), 131 to 151 (GWAI…ALLG), 160 to 180 (LFLT…IALA), 183 to 203 (ASIK…MMAM), 218 to 238 (FVLL…AGVL), 272 to 292 (FLIV…GFSL), 303 to 323 (IAAG…WAAV), 342 to 362 (LSVL…LAFA), and 373 to 393 (LGVI…LRFA).

The protein belongs to the NhaA Na(+)/H(+) (TC 2.A.33) antiporter family.

Its subcellular location is the cell inner membrane. It catalyses the reaction Na(+)(in) + 2 H(+)(out) = Na(+)(out) + 2 H(+)(in). In terms of biological role, na(+)/H(+) antiporter that extrudes sodium in exchange for external protons. The sequence is that of Na(+)/H(+) antiporter NhaA 1 from Novosphingobium aromaticivorans (strain ATCC 700278 / DSM 12444 / CCUG 56034 / CIP 105152 / NBRC 16084 / F199).